Here is a 435-residue protein sequence, read N- to C-terminus: Trigger factor (435 aa).

A PPIase FKBP-type domain is found at 164–249 (GDFAKFDFEG…LHEIQGKKAG (86 aa)).

This sequence belongs to the FKBP-type PPIase family. Tig subfamily.

It localises to the cytoplasm. It catalyses the reaction [protein]-peptidylproline (omega=180) = [protein]-peptidylproline (omega=0). Involved in protein export. Acts as a chaperone by maintaining the newly synthesized protein in an open conformation. Functions as a peptidyl-prolyl cis-trans isomerase. The sequence is that of Trigger factor from Campylobacter fetus subsp. fetus (strain 82-40).